We begin with the raw amino-acid sequence, 184 residues long: Urease accessory protein UreE (184 aa).

Positions 147–184 (EHHGHSHSHSHSHDHDHDHDHDHQHGPSCSHGHHHGHR) are disordered. Residues 157–171 (HSHDHDHDHDHDHQH) show a composition bias toward basic and acidic residues.

This sequence belongs to the UreE family.

It localises to the cytoplasm. Involved in urease metallocenter assembly. Binds nickel. Probably functions as a nickel donor during metallocenter assembly. This Burkholderia mallei (strain ATCC 23344) protein is Urease accessory protein UreE.